Reading from the N-terminus, the 89-residue chain is Elongation factor 1-beta (89 aa).

Belongs to the EF-1-beta/EF-1-delta family.

Its function is as follows. Promotes the exchange of GDP for GTP in EF-1-alpha/GDP, thus allowing the regeneration of EF-1-alpha/GTP that could then be used to form the ternary complex EF-1-alpha/GTP/AAtRNA. This chain is Elongation factor 1-beta, found in Methanosarcina mazei (strain ATCC BAA-159 / DSM 3647 / Goe1 / Go1 / JCM 11833 / OCM 88) (Methanosarcina frisia).